A 358-amino-acid chain; its full sequence is Alanine racemase (358 aa).

The Proton acceptor; specific for D-alanine role is filled by Lys34. N6-(pyridoxal phosphate)lysine is present on Lys34. Arg129 is a binding site for substrate. Tyr254 functions as the Proton acceptor; specific for L-alanine in the catalytic mechanism. A substrate-binding site is contributed by Met302.

It belongs to the alanine racemase family. The cofactor is pyridoxal 5'-phosphate.

It catalyses the reaction L-alanine = D-alanine. The protein operates within amino-acid biosynthesis; D-alanine biosynthesis; D-alanine from L-alanine: step 1/1. Its function is as follows. Catalyzes the interconversion of L-alanine and D-alanine. May also act on other amino acids. This chain is Alanine racemase (alr), found in Vibrio vulnificus (strain CMCP6).